A 371-amino-acid chain; its full sequence is tRNA-specific 2-thiouridylase MnmA (371 aa).

Residues 14 to 21 (GMSGGVDS) and M40 contribute to the ATP site. Residues 100–102 (NPD) are interaction with target base in tRNA. C105 functions as the Nucleophile in the catalytic mechanism. Cysteines 105 and 205 form a disulfide. G129 contributes to the ATP binding site. An interaction with tRNA region spans residues 155-157 (KDQ). C205 functions as the Cysteine persulfide intermediate in the catalytic mechanism. The tract at residues 321–322 (RY) is interaction with tRNA.

Belongs to the MnmA/TRMU family.

Its subcellular location is the cytoplasm. The catalysed reaction is S-sulfanyl-L-cysteinyl-[protein] + uridine(34) in tRNA + AH2 + ATP = 2-thiouridine(34) in tRNA + L-cysteinyl-[protein] + A + AMP + diphosphate + H(+). In terms of biological role, catalyzes the 2-thiolation of uridine at the wobble position (U34) of tRNA, leading to the formation of s(2)U34. The polypeptide is tRNA-specific 2-thiouridylase MnmA (Bordetella pertussis (strain Tohama I / ATCC BAA-589 / NCTC 13251)).